Reading from the N-terminus, the 182-residue chain is Molybdopterin synthase catalytic subunit (182 aa).

Residues 119–120 (HR), Lys135, and 142–144 (KRE) contribute to the substrate site. A disordered region spans residues 152–182 (VWRANRDGAPGQRIDTAEPAVGAGSGGEIDD).

The protein belongs to the MoaE family. MOCS2B subfamily. Heterotetramer; composed of 2 small (MOCS2A) and 2 large (MOCS2B) subunits.

The protein resides in the cytoplasm. The catalysed reaction is 2 [molybdopterin-synthase sulfur-carrier protein]-C-terminal-Gly-aminoethanethioate + cyclic pyranopterin phosphate + H2O = molybdopterin + 2 [molybdopterin-synthase sulfur-carrier protein]-C-terminal Gly-Gly + 2 H(+). The protein operates within cofactor biosynthesis; molybdopterin biosynthesis. In terms of biological role, catalytic subunit of the molybdopterin synthase complex, a complex that catalyzes the conversion of precursor Z into molybdopterin. Acts by mediating the incorporation of 2 sulfur atoms from thiocarboxylated MOCS2A into precursor Z to generate a dithiolene group. This Pyricularia oryzae (strain 70-15 / ATCC MYA-4617 / FGSC 8958) (Rice blast fungus) protein is Molybdopterin synthase catalytic subunit.